We begin with the raw amino-acid sequence, 439 residues long: Trigger factor (439 aa).

The PPIase FKBP-type domain maps to 163-248 (GDIAVIDFEG…LNQIKERVLP (86 aa)).

This sequence belongs to the FKBP-type PPIase family. Tig subfamily.

The protein localises to the cytoplasm. The enzyme catalyses [protein]-peptidylproline (omega=180) = [protein]-peptidylproline (omega=0). Functionally, involved in protein export. Acts as a chaperone by maintaining the newly synthesized protein in an open conformation. Functions as a peptidyl-prolyl cis-trans isomerase. In Syntrophotalea carbinolica (strain DSM 2380 / NBRC 103641 / GraBd1) (Pelobacter carbinolicus), this protein is Trigger factor.